We begin with the raw amino-acid sequence, 461 residues long: MSAPRGDHAILRARNLTKRVATLGPSTDVLRPDELIKFLDLVDGVRINLAHASPNEVKFRIEAVRSYEKAKNRPLAVIVDLKGPSIRVGSTSPINVQEGEVVKFKLSDKSDGTYIPVPNKAFFSAVEQNDVILMLDGRLRLKVTNTGSDWIEAVAESSGVITGGKAIVVEGKDYDISTPAEEDVEALKAISPIRDNIDYVAISLAKSCKDVDSVRSLLTELGFQSQVAVKIETKGAVNNLEELVQCSDYVVVARGDLGLHYGLDALPIVQRRIVHTSLKYGKPIAVATQLLDSMQSSPIPTRAEINDVFTTASMGVDSLWLTNETASGKYPLAAVSWLSRILMNVEYQIPQSPLLQNSRDRFAKGLVELAQDLGANILVFSMSGTLARRIAKFRPRGVVYVGTPNVRVARSLSIVWALEPLYIPAENYEEGLEKLISLKGTTPFVATYGIRGGVHSVKVKL.

Arginine 46 is a substrate binding site. K(+)-binding residues include asparagine 48 and aspartate 80. An ATP-binding site is contributed by 48–51 (NLAH). Arginine 87 and lysine 165 together coordinate ATP. Glutamate 232 contacts Mg(2+). Substrate contacts are provided by glycine 255, aspartate 256, and threonine 288. Mg(2+) is bound at residue aspartate 256.

Belongs to the pyruvate kinase family. As to quaternary structure, homotetramer. A divalent metal cation serves as cofactor.

The enzyme catalyses pyruvate + ATP = phosphoenolpyruvate + ADP + H(+). Its pathway is carbohydrate degradation; glycolysis; pyruvate from D-glyceraldehyde 3-phosphate: step 5/5. Its activity is regulated as follows. Not activated by classical allosteric effectors. The protein is Pyruvate kinase (pyk) of Pyrobaculum aerophilum (strain ATCC 51768 / DSM 7523 / JCM 9630 / CIP 104966 / NBRC 100827 / IM2).